The chain runs to 1184 residues: uncharacterized protein (1184 aa).

2 disordered regions span residues 115–152 and 397–426; these read ETSS…AHVS and TYKP…VPER. Composition is skewed to polar residues over residues 137–152 and 397–421; these read HVMN…AHVS and TYKP…TSHN. Ser-686 is modified (phosphoserine). Composition is skewed to basic and acidic residues over residues 705 to 767, 783 to 792, 849 to 863, and 891 to 902; these read LSER…ESAH, FEHETEPSHY, SHAH…RDLG, and YLHDEKTRDTLT. Disordered stretches follow at residues 705-870 and 890-1017; these read LSER…FGDV and DYLH…SSPK. At Ser-905 the chain carries Phosphoserine. Residues 920-932 are compositionally biased toward basic and acidic residues; it reads EDHPHASEAERAH. Residues 941-950 show a composition bias toward low complexity; it reads SSESSPESQS. Residues 999 to 1011 are compositionally biased toward basic and acidic residues; the sequence is PRERLDDNAKEIL. Position 1018 is a phosphoserine (Ser-1018). Disordered stretches follow at residues 1029-1107 and 1135-1154; these read NRKD…IGTQ and DVDN…KSRP. Positions 1032 to 1045 are enriched in basic and acidic residues; the sequence is DKAAVKRMLEEDSS. A compositionally biased stretch (polar residues) spans 1073–1107; it reads PAVNNSTKPVAVTSKNGHSRNGSHAAHSNNVIGTQ. A compositionally biased stretch (low complexity) spans 1138 to 1150; it reads NVVSGHSNVNGVS.

It is found in the cytoplasm. This is an uncharacterized protein from Schizosaccharomyces pombe (strain 972 / ATCC 24843) (Fission yeast).